Consider the following 262-residue polypeptide: Small ribosomal subunit protein uS2 (262 aa).

Belongs to the universal ribosomal protein uS2 family.

This Rhodospirillum rubrum (strain ATCC 11170 / ATH 1.1.1 / DSM 467 / LMG 4362 / NCIMB 8255 / S1) protein is Small ribosomal subunit protein uS2.